The following is a 285-amino-acid chain: ATP synthase gamma chain (285 aa).

This sequence belongs to the ATPase gamma chain family. F-type ATPases have 2 components, CF(1) - the catalytic core - and CF(0) - the membrane proton channel. CF(1) has five subunits: alpha(3), beta(3), gamma(1), delta(1), epsilon(1). CF(0) has three main subunits: a, b and c.

It localises to the cell membrane. Functionally, produces ATP from ADP in the presence of a proton gradient across the membrane. The gamma chain is believed to be important in regulating ATPase activity and the flow of protons through the CF(0) complex. This is ATP synthase gamma chain from Lysinibacillus sphaericus (strain C3-41).